A 318-amino-acid polypeptide reads, in one-letter code: Trans-prenyltransferase (318 aa).

Residues Met-1 to Thr-21 form a helical membrane-spanning segment. Isopentenyl diphosphate is bound by residues Lys-85, Arg-88, and His-122. Asp-129 and Asp-135 together coordinate Mg(2+). Arg-140 is a dimethylallyl diphosphate binding site. An isopentenyl diphosphate-binding site is contributed by Arg-141. Dimethylallyl diphosphate-binding residues include Lys-216, Thr-217, and Gln-254.

Belongs to the FPP/GGPP synthase family. Asfivirus trans-prenyltransferase subfamily. The cofactor is Mg(2+).

It is found in the host endoplasmic reticulum. It localises to the host membrane. It catalyses the reaction isopentenyl diphosphate + dimethylallyl diphosphate = (2E)-geranyl diphosphate + diphosphate. The catalysed reaction is isopentenyl diphosphate + (2E)-geranyl diphosphate = (2E,6E)-farnesyl diphosphate + diphosphate. The enzyme catalyses isopentenyl diphosphate + (2E,6E)-farnesyl diphosphate = (2E,6E,10E)-geranylgeranyl diphosphate + diphosphate. It carries out the reaction isopentenyl diphosphate + (2E,6E,10E)-geranylgeranyl diphosphate = (2E,6E,10E,14E)-geranylfarnesyl diphosphate + diphosphate. It functions in the pathway isoprenoid biosynthesis; farnesyl diphosphate biosynthesis; farnesyl diphosphate from geranyl diphosphate and isopentenyl diphosphate: step 1/1. It participates in isoprenoid biosynthesis; geranyl diphosphate biosynthesis; geranyl diphosphate from dimethylallyl diphosphate and isopentenyl diphosphate: step 1/1. Its pathway is isoprenoid biosynthesis; geranylgeranyl diphosphate biosynthesis; geranylgeranyl diphosphate from farnesyl diphosphate and isopentenyl diphosphate: step 1/1. In terms of biological role, trans-prenyltransferase that catalyzes the sequential condensation of isopentenyl diphosphate (IPP) with different allylic diphosphates, such as dimethylallyl diphosphate (DMAPP), geranyl diphosphate (GPP), farnesyl diphosphate (FPP) and geranylgeranyl diphosphate (GGPP), farnesyl diphosphate being the best allylic substrate. The sequence is that of Trans-prenyltransferase from African swine fever virus (isolate Tick/Malawi/Lil 20-1/1983) (ASFV).